A 237-amino-acid chain; its full sequence is Ras modification protein ERF4 (237 aa).

Belongs to the ERF4 family. As to quaternary structure, interacts with ERF2.

The protein resides in the endoplasmic reticulum membrane. Functionally, the ERF2-SHR5 complex is a palmitoyltransferase specific for Ras proteins. Palmitoylates RAS2, which is required for its proper plasma membrane localization. This chain is Ras modification protein ERF4 (SHR5), found in Saccharomyces cerevisiae (strain ATCC 204508 / S288c) (Baker's yeast).